A 1005-amino-acid chain; its full sequence is Protein TIC 214 (1005 aa).

The next 6 membrane-spanning stretches (helical) occupy residues 25–45, 67–87, 91–111, 131–151, 177–197, and 304–324; these read VGLY…LFLL, FFTG…HLAL, HTIL…SNSG, SFQL…SVLG, FVGW…VFVW, and LFSI…PLLY. Disordered regions lie at residues 457 to 481 and 767 to 833; these read VEEG…EREE and KKKK…KRKQ. Positions 783-810 are enriched in basic residues; the sequence is KQKKVKSKQKKVKSKQKKVKSKQKKVKS. The segment covering 811 to 824 has biased composition (basic and acidic residues); sequence KQNEIKSKQNEIKS.

This sequence belongs to the TIC214 family. As to quaternary structure, part of the Tic complex.

Its subcellular location is the plastid. The protein resides in the chloroplast inner membrane. Its function is as follows. Involved in protein precursor import into chloroplasts. May be part of an intermediate translocation complex acting as a protein-conducting channel at the inner envelope. This is Protein TIC 214 from Oenothera berteroana (Bertero's evening primrose).